We begin with the raw amino-acid sequence, 416 residues long: UDP-N-acetylglucosamine 1-carboxyvinyltransferase (416 aa).

22 to 23 (KN) contributes to the phosphoenolpyruvate binding site. A UDP-N-acetyl-alpha-D-glucosamine-binding site is contributed by Arg92. The active-site Proton donor is the Cys116. Position 116 is a 2-(S-cysteinyl)pyruvic acid O-phosphothioketal (Cys116). UDP-N-acetyl-alpha-D-glucosamine-binding positions include 121–125 (RPVDQ), Asp304, and Ile326.

The protein belongs to the EPSP synthase family. MurA subfamily.

It localises to the cytoplasm. The enzyme catalyses phosphoenolpyruvate + UDP-N-acetyl-alpha-D-glucosamine = UDP-N-acetyl-3-O-(1-carboxyvinyl)-alpha-D-glucosamine + phosphate. Its pathway is cell wall biogenesis; peptidoglycan biosynthesis. Its function is as follows. Cell wall formation. Adds enolpyruvyl to UDP-N-acetylglucosamine. This chain is UDP-N-acetylglucosamine 1-carboxyvinyltransferase, found in Cupriavidus taiwanensis (strain DSM 17343 / BCRC 17206 / CCUG 44338 / CIP 107171 / LMG 19424 / R1) (Ralstonia taiwanensis (strain LMG 19424)).